The primary structure comprises 382 residues: MAGIPGLFILLVLLCVFMQVSPYTVPWKPTWPAYRLPVVLPQSTLNLAKADFDAKAKLEVSSSCGPQCHKGTPLPTYEEAKQYLSYETLYANGSRTETRVGIYILSNGEGRARGRDSEATGRSRRKRQIYGYDGRFSIFGKDFLLNYPFSTSVKLSTGCTGTLVAEKHVLTAAHCIHDGKTYVKGTQKLRVGFLKPKYKDGAGGDNSSSSAMPDKMKFQWIRVKRTHVPKGWIKGNANDIGMDYDYALLELKKPHKRQFMKIGVSPPAKQLPGGRIHFSGYDNDRPGNLVYRFCDVKDETYDLLYQQCDAQPGASGSGVYVRMWKRPQQKWERKIIGIFSGHQWVDMNGSPQDFNVAVRITPLKYAQICYWIKGNYLDCREG.

Residues M1–P22 form the signal peptide. A glycan (N-linked (GlcNAc...) asparagine) is linked at N92. A disulfide bridge links C159 with C175. The Charge relay system role is filled by H174. N-linked (GlcNAc...) asparagine glycosylation occurs at N206. Catalysis depends on charge relay system residues D239 and S315.

Belongs to the peptidase S1 family.

Its subcellular location is the secreted. The sequence is that of Serine protease 23 (Prss23) from Mus musculus (Mouse).